The primary structure comprises 647 residues: Leucine aminopeptidase 2 (647 aa).

Residues 169–171 (QCQ) and 295–300 (PYGGME) each bind substrate. A Zn(2+)-binding site is contributed by H324. E325 (proton acceptor) is an active-site residue. 2 residues coordinate Zn(2+): H328 and E347. The active-site Proton donor is Y418.

The protein belongs to the peptidase M1 family. It depends on Zn(2+) as a cofactor.

The protein resides in the cytoplasm. The protein localises to the nucleus. It catalyses the reaction an epoxide + H2O = an ethanediol. Functionally, aminopeptidase that preferentially cleaves di- and tripeptides. Also has low epoxide hydrolase activity (in vitro). Can hydrolyze the epoxide leukotriene LTA(4) but it forms preferentially 5,6-dihydroxy-7,9,11,14-eicosatetraenoic acid rather than the cytokine leukotriene B(4) as the product compared to the homologous mammalian enzyme (in vitro). The sequence is that of Leucine aminopeptidase 2 from Yarrowia lipolytica (strain CLIB 122 / E 150) (Yeast).